The primary structure comprises 25 residues: Hemocyanin subunit 3 (25 aa).

This sequence belongs to the tyrosinase family. Hemocyanin subfamily. In terms of tissue distribution, hemolymph.

The protein localises to the secreted. Its subcellular location is the extracellular space. Its function is as follows. Hemocyanins are copper-containing oxygen carriers occurring freely dissolved in the hemolymph of many mollusks and arthropods. This is Hemocyanin subunit 3 from Maja squinado (Mediterranean spider crab).